Reading from the N-terminus, the 68-residue chain is Conotoxin mr3g (68 aa).

The signal sequence occupies residues 1–19 (MSKLGVLLTICLLLFALTA). A propeptide spanning residues 20–51 (VPLDGDQPADRPAERMQDDISSERHPMFDAVR) is cleaved from the precursor. Cystine bridges form between C53–C67, C54–C63, and C59–C66. 4-hydroxyproline occurs at positions 55 and 65. C67 carries the post-translational modification Cysteine amide.

Expressed by the venom duct.

The protein resides in the secreted. Functionally, intracranially injection into mice does not elicit symptoms. The chain is Conotoxin mr3g from Conus marmoreus (Marble cone).